The sequence spans 102 residues: MAPIPFEHALVLASVLFVLGLVALLIRRNLIVMLMSVEIMLNAAGLAFIAAGSRWGQPDGQVMFLLILTLAAAEVGVGLGLGLQVYRRHKTLDVDRLSEMQG.

The next 3 membrane-spanning stretches (helical) occupy residues 6 to 26 (FEHALVLASVLFVLGLVALLI), 30 to 50 (LIVMLMSVEIMLNAAGLAFIA), and 62 to 82 (VMFLLILTLAAAEVGVGLGLG).

It belongs to the complex I subunit 4L family. As to quaternary structure, NDH-1 is composed of 14 different subunits. Subunits NuoA, H, J, K, L, M, N constitute the membrane sector of the complex.

Its subcellular location is the cell inner membrane. It carries out the reaction a quinone + NADH + 5 H(+)(in) = a quinol + NAD(+) + 4 H(+)(out). Its function is as follows. NDH-1 shuttles electrons from NADH, via FMN and iron-sulfur (Fe-S) centers, to quinones in the respiratory chain. The immediate electron acceptor for the enzyme in this species is believed to be ubiquinone. Couples the redox reaction to proton translocation (for every two electrons transferred, four hydrogen ions are translocated across the cytoplasmic membrane), and thus conserves the redox energy in a proton gradient. The protein is NADH-quinone oxidoreductase subunit K of Methylococcus capsulatus (strain ATCC 33009 / NCIMB 11132 / Bath).